The following is a 386-amino-acid chain: Innexin unc-9 (386 aa).

Helical transmembrane passes span 33 to 53 (TAII…GFPI), 103 to 123 (QWVP…TIVW), 197 to 217 (FLYI…IFLL), and 282 to 302 (IFLF…CSLF).

The protein belongs to the pannexin family. Heterooligomer of unc-7 and unc-9. Interacts with F-actin. In terms of tissue distribution, expressed in PLM neurons (at protein level). Expressed in the nerve ring.

The protein localises to the cell membrane. Its subcellular location is the cell junction. It localises to the gap junction. Its function is as follows. Structural component of gap junctions. Plays a role in maintaining gap junction activity to promote locomotion. The sequence is that of Innexin unc-9 from Caenorhabditis elegans.